The primary structure comprises 880 residues: Alanine--tRNA ligase (880 aa).

4 residues coordinate Zn(2+): H567, H571, C669, and H673.

This sequence belongs to the class-II aminoacyl-tRNA synthetase family. Zn(2+) serves as cofactor.

The protein resides in the cytoplasm. It carries out the reaction tRNA(Ala) + L-alanine + ATP = L-alanyl-tRNA(Ala) + AMP + diphosphate. In terms of biological role, catalyzes the attachment of alanine to tRNA(Ala) in a two-step reaction: alanine is first activated by ATP to form Ala-AMP and then transferred to the acceptor end of tRNA(Ala). Also edits incorrectly charged Ser-tRNA(Ala) and Gly-tRNA(Ala) via its editing domain. This chain is Alanine--tRNA ligase, found in Bacillus thuringiensis subsp. konkukian (strain 97-27).